The following is a 115-amino-acid chain: Large ribosomal subunit protein bL19 (115 aa).

It belongs to the bacterial ribosomal protein bL19 family.

Its function is as follows. This protein is located at the 30S-50S ribosomal subunit interface and may play a role in the structure and function of the aminoacyl-tRNA binding site. This is Large ribosomal subunit protein bL19 from Streptococcus pneumoniae serotype 2 (strain D39 / NCTC 7466).